Here is a 363-residue protein sequence, read N- to C-terminus: Chorismate synthase (363 aa).

Positions 48 and 54 each coordinate NADP(+). FMN is bound by residues 125-127, 237-238, glycine 277, 292-296, and arginine 318; these read RSS, NA, and KPTSS.

The protein belongs to the chorismate synthase family. Homotetramer. Requires FMNH2 as cofactor.

The catalysed reaction is 5-O-(1-carboxyvinyl)-3-phosphoshikimate = chorismate + phosphate. It functions in the pathway metabolic intermediate biosynthesis; chorismate biosynthesis; chorismate from D-erythrose 4-phosphate and phosphoenolpyruvate: step 7/7. Catalyzes the anti-1,4-elimination of the C-3 phosphate and the C-6 proR hydrogen from 5-enolpyruvylshikimate-3-phosphate (EPSP) to yield chorismate, which is the branch point compound that serves as the starting substrate for the three terminal pathways of aromatic amino acid biosynthesis. This reaction introduces a second double bond into the aromatic ring system. This chain is Chorismate synthase, found in Pseudomonas putida (strain W619).